The sequence spans 439 residues: Apolipoprotein N-acyltransferase (439 aa).

6 consecutive transmembrane segments (helical) span residues 13–33 (LLAG…FLVF), 47–67 (LFSF…IPLI), 75–95 (FIAY…QFGL), 97–117 (YLLW…YTLV), 149–169 (NAGT…FPLF), and 175–195 (IFSL…ETSY). Positions 207–439 (IQPFVPQDVK…GSRGILLFSF (233 aa)) constitute a CN hydrolase domain. Residue glutamate 248 is the Proton acceptor of the active site. The active site involves lysine 305. The Nucleophile role is filled by cysteine 355.

Belongs to the CN hydrolase family. Apolipoprotein N-acyltransferase subfamily.

It localises to the cell inner membrane. It carries out the reaction N-terminal S-1,2-diacyl-sn-glyceryl-L-cysteinyl-[lipoprotein] + a glycerophospholipid = N-acyl-S-1,2-diacyl-sn-glyceryl-L-cysteinyl-[lipoprotein] + a 2-acyl-sn-glycero-3-phospholipid + H(+). Its pathway is protein modification; lipoprotein biosynthesis (N-acyl transfer). In terms of biological role, catalyzes the phospholipid dependent N-acylation of the N-terminal cysteine of apolipoprotein, the last step in lipoprotein maturation. This is Apolipoprotein N-acyltransferase from Aquifex aeolicus (strain VF5).